The primary structure comprises 347 residues: NADH-ubiquinone oxidoreductase chain 2 (347 aa).

Transmembrane regions (helical) follow at residues 3-23 (PVVLTMILLTIMLGTVIVMTT), 25-45 (HWLLVWIGFEMNMLAIIPILM), 59-79 (YFLTQATASMLLMLAIVINLI), 96-116 (IIMTLALAMKLGLAPFHFWVP), 122-142 (IQLSSGLILLTWQKLAPMSIL), 149-169 (INLHLLLLMSLTSILIGGWGG), 178-198 (IMAYSSIAHMGWMTTIMIYNP), 200-220 (MALLNLTIYIILTTTTFMTFM), 237-257 (MPLLTSAVLMTMLSLGGLPPL), 274-294 (NSIIMPTIMAITALLNLFFYM), and 325-345 (LLSPMIILSTLILPLSPMLAL).

Belongs to the complex I subunit 2 family. As to quaternary structure, core subunit of respiratory chain NADH dehydrogenase (Complex I) which is composed of 45 different subunits. Interacts with TMEM242.

The protein resides in the mitochondrion inner membrane. The enzyme catalyses a ubiquinone + NADH + 5 H(+)(in) = a ubiquinol + NAD(+) + 4 H(+)(out). In terms of biological role, core subunit of the mitochondrial membrane respiratory chain NADH dehydrogenase (Complex I) which catalyzes electron transfer from NADH through the respiratory chain, using ubiquinone as an electron acceptor. Essential for the catalytic activity and assembly of complex I. The protein is NADH-ubiquinone oxidoreductase chain 2 of Paranyctimene raptor (Unstriped tube-nosed fruit bat).